The chain runs to 287 residues: MKTRDMNRDWIATAATLNAALPYLQRYDDAIVVIKLGGHAMGSDEAMESFARDVVLLRQVGVNPVVVHGGGPMINAMLKKLDIQSEFVNGKRVTDVATVEVVEMVLSGVVNKRIVQEINRQGGKAVGLSGKDANLMICDQTNPDLGFVGTPTEMNPDLLRNLFAHDIIPVIAPLGAGREGETFNVNGDTAAGAIAAALKADRLLLLTDVSGVKNGEGEVLTELKAGQIREMIADGTIAGGMIPKTETALDALDNGVRAVVILDGRVDNAVLLELYTEHGAGSLIRRD.

Substrate-binding positions include Gly70–Gly71, Arg92, and Asn184.

This sequence belongs to the acetylglutamate kinase family. ArgB subfamily.

Its subcellular location is the cytoplasm. It catalyses the reaction N-acetyl-L-glutamate + ATP = N-acetyl-L-glutamyl 5-phosphate + ADP. It functions in the pathway amino-acid biosynthesis; L-arginine biosynthesis; N(2)-acetyl-L-ornithine from L-glutamate: step 2/4. Catalyzes the ATP-dependent phosphorylation of N-acetyl-L-glutamate. This chain is Acetylglutamate kinase, found in Ruegeria pomeroyi (strain ATCC 700808 / DSM 15171 / DSS-3) (Silicibacter pomeroyi).